The primary structure comprises 194 residues: uncharacterized protein (194 aa).

A helical transmembrane segment spans residues 17 to 37; that stretch reads DVWLYLLVFGCLSVLVLVLVH.

This sequence belongs to the IIV-6 307L family.

It localises to the membrane. This is an uncharacterized protein from Invertebrate iridescent virus 3 (IIV-3).